Consider the following 3567-residue polypeptide: Erythronolide synthase EryA2 (3567 aa).

Residues 30–455 enclose the Ketosynthase family 3 (KS3) 1 domain; it reads SDPIAIVSMA…GTNAHVIVEE (426 aa). 2 module regions span residues 33 to 1467 and 1491 to 3485; these read IAIV…QHLR and IAIV…EHLR. The active-site Acyl-thioester intermediate; for beta-ketoacyl synthase 1 activity is Cys202. Residues His337 and His377 each act as for beta-ketoacyl synthase 1 activity in the active site. Residues 560-880 form an acyltransferase 1 region; that stretch reads VFLFPGQGSQ…MATAHVSGVD (321 aa). Ser651 acts as the Acyl-ester intermediate; for acyltransferase 1 activity in catalysis. Positions 1132-1297 are C2-type beta-ketoacyl reductase 1; it reads GTVLVTGAAS…CTSVAWTPWA (166 aa). The For C2-type beta-ketoacyl reductase 1 and probable racemase activity role is filled by Tyr1267. A disordered region spans residues 1364–1385; the sequence is GRGGQAEAEPDSGPTGEPAQRL. In terms of domain architecture, Carrier 1 spans 1395-1470; it reads ENLLELVANA…ALAQHLRARL (76 aa). Ser1430 is subject to O-(pantetheine 4'-phosphoryl)serine. Residues 1488–1912 form the Ketosynthase family 3 (KS3) 2 domain; it reads SEPIAIVGIG…GTNAHVIVEE (425 aa). Residue Cys1661 is the Acyl-thioester intermediate; for beta-ketoacyl synthase 2 activity of the active site. Active-site for beta-ketoacyl synthase 2 activity residues include His1796 and His1834. The tract at residues 2015–2331 is acyltransferase 2; it reads LVFPGQGAQW…NLLRAHVHGV (317 aa). The active-site Acyl-ester intermediate; for acyltransferase 2 activity is Ser2105. Residues 2377–2502 are N-terminal hotdog fold; that stretch reads HPLLLAAVDV…GTLAQGVAAG (126 aa). A dehydratase region spans residues 2377–2645; it reads HPLLLAAVDV…SLVVRSTGEK (269 aa). One can recognise a PKS/mFAS DH domain in the interval 2377 to 2648; the sequence is HPLLLAAVDV…VRSTGEKWEQ (272 aa). His2409 acts as the Proton acceptor; for dehydratase activity in catalysis. The C-terminal hotdog fold stretch occupies residues 2514–2648; that stretch reads AVRIPLDDHY…VRSTGEKWEQ (135 aa). Asp2571 serves as the catalytic Proton donor; for dehydratase activity. Residues 2831–3131 form an enoyl reductase region; that stretch reads GAIDSVAFEP…RGRHVGKLVL (301 aa). Residue Tyr2874 is the For enoyl reductase activity of the active site. NADP(+) contacts are provided by residues 2964–2973, 3149–3152, 3173–3176, 3202–3203, Lys3250, and 3272–3273; these read HAAAGGVGMA, TGTL, SRRG, DT, and FS. The tract at residues 3141–3317 is beta-ketoacyl reductase 2; it reads GTVLITGGTG…AKALGWGLWA (177 aa). Tyr3287 serves as the catalytic For beta-ketoacyl reductase 2 activity. The region spanning 3413-3488 is the Carrier 2 domain; sequence AGLAELVRSH…AVAEHLRDRL (76 aa). Ser3448 is subject to O-(pantetheine 4'-phosphoryl)serine.

Homodimer. Erythronolide synthase is composed of EryAI, EryAII and EryAIII multimodular (2 modules) polypeptides each coding for a functional synthase subunit which participates in 2 of the six FAS-like elongation steps required for formation of the polyketide. Module 1, 2, 3, 4, 5, and 6 participating in biosynthesis steps 1, 2, 3, 4, 5, and 6, respectively. Requires pantetheine 4'-phosphate as cofactor.

The enzyme catalyses 6 (S)-methylmalonyl-CoA + propanoyl-CoA + 6 NADPH + 12 H(+) = 6-deoxyerythronolide B + 6 CO2 + 6 NADP(+) + 7 CoA + H2O. It functions in the pathway antibiotic biosynthesis; erythromycin biosynthesis. Functionally, involved in the biosynthesis of antibiotic erythromycin via the biosynthesis of its aglycone precursor, 6-deoxyerythronolide B (6-dEB). The chain is Erythronolide synthase EryA2 from Saccharopolyspora erythraea (Streptomyces erythraeus).